The following is a 375-amino-acid chain: Alcohol dehydrogenase 6 (375 aa).

The residue at position 23 (S23) is a Phosphoserine. Zn(2+) contacts are provided by C47, H69, C99, C102, C105, C113, and C175. Residues 200-205, D224, K229, 293-295, and R370 each bind NAD(+); these read GLGGVG and VGL.

This sequence belongs to the zinc-containing alcohol dehydrogenase family. Class-V subfamily. In terms of assembly, dimer. It depends on Zn(2+) as a cofactor.

It localises to the cytoplasm. The catalysed reaction is a primary alcohol + NAD(+) = an aldehyde + NADH + H(+). It catalyses the reaction a secondary alcohol + NAD(+) = a ketone + NADH + H(+). In terms of biological role, alcohol dehydrogenase. Catalyzes the NAD-dependent oxidation of primary alcohols to the corresponding aldehydes. Oxidizes secondary alcohols to the corresponding ketones. This chain is Alcohol dehydrogenase 6 (ADH6), found in Pongo abelii (Sumatran orangutan).